We begin with the raw amino-acid sequence, 535 residues long: Alpha-1,3-mannosyl-glycoprotein 4-beta-N-acetylglucosaminyltransferase A (535 aa).

Over Met-1 to Gly-6 the chain is Cytoplasmic. A helical; Signal-anchor for type II membrane protein membrane pass occupies residues Thr-7–Trp-27. A coiled-coil region spans residues Gln-28–Asn-63. Residues Gln-28 to Ser-535 are Lumenal-facing. Residues Asn-77 and Asn-458 are each glycosylated (N-linked (GlcNAc...) asparagine). Ser-474 is subject to Phosphoserine.

The protein belongs to the glycosyltransferase 54 family. It depends on a divalent metal cation as a cofactor. Post-translationally, N-glycosylated.

The protein localises to the golgi apparatus membrane. It localises to the secreted. It catalyses the reaction N(4)-{beta-D-GlcNAc-(1-&gt;2)-alpha-D-Man-(1-&gt;3)-[beta-D-GlcNAc-(1-&gt;2)-alpha-D-Man-(1-&gt;6)]-beta-D-Man-(1-&gt;4)-beta-D-GlcNAc-(1-&gt;4)-beta-D-GlcNAc}-L-asparaginyl-[protein] + UDP-N-acetyl-alpha-D-glucosamine = N(4)-{beta-D-GlcNAc-(1-&gt;2)-[beta-D-GlcNAc-(1-&gt;4)]-alpha-D-Man-(1-&gt;3)-[beta-D-GlcNAc-(1-&gt;2)-alpha-D-Man-(1-&gt;6)]-beta-D-Man-(1-&gt;4)-beta-D-GlcNAc-(1-&gt;4)-beta-D-GlcNAc}-L-asparaginyl-[protein] + UDP + H(+). The enzyme catalyses an N(4)-{beta-D-GlcNAc-(1-&gt;2)-alpha-D-Man-(1-&gt;3)-[alpha-D-Man-(1-&gt;6)]-beta-D-Man-(1-&gt;4)-beta-D-GlcNAc-(1-&gt;4)-beta-D-GlcNAc}-L-asparaginyl-[protein] + UDP-N-acetyl-alpha-D-glucosamine = an N(4)-{beta-D-GlcNAc-(1-&gt;2)-[beta-D-GlcNAc-(1-&gt;4)]-alpha-D-Man-(1-&gt;3)-[alpha-D-Man-(1-&gt;6)]-beta-D-Man-(1-&gt;4)-beta-D-GlcNAc-(1-&gt;4)-beta-D-GlcNAc}-L-asparaginyl-[protein] + UDP + H(+). It carries out the reaction an N(4)-{beta-D-GlcNAc-(1-&gt;2)-alpha-D-Man-(1-&gt;3)-[beta-D-GlcNAc-(1-&gt;2)-[beta-D-GlcNAc-(1-&gt;6)]-alpha-D-Man-(1-&gt;6)]-beta-D-Man-(1-&gt;4)-beta-D-GlcNAc-(1-&gt;4)-beta-D-GlcNAc}-L-asparaginyl-[protein] + UDP-N-acetyl-alpha-D-glucosamine = an N(4)-{beta-D-GlcNAc-(1-&gt;2)-[beta-D-GlcNAc-(1-&gt;4)]-alpha-D-Man-(1-&gt;3)-[beta-D-GlcNAc-(1-&gt;2)-[beta-D-GlcNAc-(1-&gt;6)]-alpha-D-Man-(1-&gt;6)]-beta-D-Man-(1-&gt;4)-beta-D-GlcNAc-(1-&gt;4)-beta-D-GlcNAc}-L-asparaginyl-[protein] + UDP + H(+). The catalysed reaction is an N(4)-{beta-D-GlcNAc-(1-&gt;2)-alpha-D-Man-(1-&gt;3)-[beta-D-GlcNAc-(1-&gt;2)-alpha-D-Man-(1-&gt;6)]-beta-D-Man-(1-&gt;4)-beta-D-GlcNAc-(1-&gt;4)-[alpha-L-Fuc-(1-&gt;6)]-beta-D-GlcNAc}-L-asparaginyl-[protein] + UDP-N-acetyl-alpha-D-glucosamine = N(4)-{beta-D-GlcNAc-(1-&gt;2)-[beta-D-GlcNAc-(1-&gt;4)]-alpha-D-Man-(1-&gt;3)-[beta-D-GlcNAc-(1-&gt;2)-alpha-D-Man-(1-&gt;6)]-beta-D-Man-(1-&gt;4)-beta-D-GlcNAc-(1-&gt;4)-[alpha-L-Fuc-(1-&gt;6)]-beta-D-GlcNAc}-asparaginyl-[protein] + UDP + H(+). It catalyses the reaction an N(4)-{beta-D-GlcNAc-(1-&gt;2)-alpha-D-Man-(1-&gt;3)-[beta-D-Gal-(1-&gt;4)-beta-D-GlcNAc-(1-&gt;2)-alpha-D-Man-(1-&gt;6)]-beta-D-Man-(1-&gt;4)-beta-D-GlcNAc-(1-&gt;4)-beta-D-GlcNAc}-L-asparaginyl-[protein] + UDP-N-acetyl-alpha-D-glucosamine = an N(4)-{beta-D-GlcNAc-(1-&gt;2)-[beta-D-GlcNAc-(1-&gt;4)]-alpha-D-Man-(1-&gt;3)-[beta-D-Gal-(1-&gt;4)-beta-D-GlcNAc-(1-&gt;2)-alpha-D-Man-(1-&gt;6)]-beta-D-Man-(1-&gt;4)-beta-D-GlcNAc-(1-&gt;4)-beta-D-GlcNAc}-L-asparaginyl-[protein] + UDP + H(+). The enzyme catalyses N(4)-{beta-D-GlcNAc-(1-&gt;2)-alpha-D-Man-(1-&gt;3)-[alpha-D-Man-(1-&gt;3)-{alpha-D-Man-(1-&gt;6)}-alpha-D-Man-(1-&gt;6)]-beta-D-Man-(1-&gt;4)-beta-D-GlcNAc-(1-&gt;4)-beta-D-GlcNAc}-asparaginyl-[protein] + UDP-N-acetyl-alpha-D-glucosamine = N(4)-{beta-D-GlcNAc-(1-&gt;2)-[beta-D-GlcNAc-(1-&gt;4)]-alpha-D-Man-(1-&gt;3)-[alpha-D-Man-(1-&gt;3)-{alpha-D-Man-(1-&gt;6)}-alpha-D-Man-(1-&gt;6)]-beta-D-Man-(1-&gt;4)-beta-D-GlcNAc-(1-&gt;4)-beta-D-GlcNAc}-asparaginyl-[protein] + UDP + H(+). It carries out the reaction N(4)-{beta-D-GlcNAc-(1-&gt;2)-alpha-D-Man-(1-&gt;3)-beta-D-Man-(1-&gt;4)-beta-D-GlcNAc-(1-&gt;4)-beta-D-GlcNAc}-asparaginyl-[protein] + UDP-N-acetyl-alpha-D-glucosamine = N(4)-{beta-D-GlcNAc-(1-&gt;2)-[beta-D-GlcNAc-(1-&gt;4)]-alpha-D-Man-(1-&gt;3)-beta-D-Man-(1-&gt;4)-beta-D-GlcNAc-(1-&gt;4)-beta-D-GlcNAc}-asparaginyl-[protein] + UDP + H(+). It participates in protein modification; protein glycosylation. Inhibited by UDP. In terms of biological role, glycosyltransferase that catalyze the transfer of GlcNAc from UDP-GlcNAc to the GlcNAcbeta1-2Manalpha1-3 arm of the core structure of N-linked glycans through a beta1-4 linkage and participates in the production of tri- and tetra-antennary N-linked sugar chains. Involved in glucose transport by mediating SLC2A2/GLUT2 glycosylation, thereby controlling cell-surface expression of SLC2A2 in pancreatic beta cells. The sequence is that of Alpha-1,3-mannosyl-glycoprotein 4-beta-N-acetylglucosaminyltransferase A from Mus musculus (Mouse).